Reading from the N-terminus, the 520-residue chain is Autophagy-related protein 22 (520 aa).

N-linked (GlcNAc...) asparagine glycosylation occurs at asparagine 11. Helical transmembrane passes span 32–52 (IVGWYFYSFSSEPFVVSAIAT), 104–124 (FSVSVFFQTLVVITVSGVVDI), 133–153 (NVLLLFGIIGALSTILISRIY), and 158–178 (YMLAFLCILSNSCYGVVNVVG). A glycan (N-linked (GlcNAc...) asparagine) is linked at asparagine 193. 2 helical membrane passes run 214–234 (GASIGYSSALVVQIISIFLIK) and 244–264 (VATLFVGIWWLIWQLPMSWLL). Asparagine 280 carries N-linked (GlcNAc...) asparagine glycosylation. 6 helical membrane-spanning segments follow: residues 316-336 (VVIFLVGWFIVSDSVTTINST), 350-370 (LSLIVLSILTMINAILGAFTI), 386-406 (LIYIILWASFIPFYGILGFVF), 415-435 (FEMFITAIWYGISLGGLSAVS), 454-474 (IFNVTDKGSSILGPLLIGLIT), and 483-503 (SFFLLFALLILAIPIFHLLDV).

It belongs to the ATG22 family.

The protein resides in the vacuole membrane. Its function is as follows. Vacuolar effluxer which mediate the efflux of amino acids resulting from autophagic degradation. The release of autophagic amino acids allows the maintenance of protein synthesis and viability during nitrogen starvation. This is Autophagy-related protein 22 (ATG22) from Vanderwaltozyma polyspora (strain ATCC 22028 / DSM 70294 / BCRC 21397 / CBS 2163 / NBRC 10782 / NRRL Y-8283 / UCD 57-17) (Kluyveromyces polysporus).